The chain runs to 141 residues: Cystatin (141 aa).

The N-terminal stretch at 1–26 (MVHSQLPVAAPLRLLCALLLLPSATM) is a signal peptide. One can recognise a Cystatin domain in the interval 29–129 (GGLSPRSVTD…CHFQVWSRPW (101 aa)). The Secondary area of contact signature appears at 73 to 77 (QVVAG). 2 disulfide bridges follow: Cys91–Cys107 and Cys120–Cys140.

It belongs to the cystatin family. Expressed at a low level by the venom gland (at protein level).

Its subcellular location is the secreted. Functionally, inhibits various C1 cysteine proteases including cathepsin L, papain and cathepsin B. This protein has no toxic activity and its function in the venom is unknown. It may play a role as a housekeeping or regulatory protein. The polypeptide is Cystatin (Pseudonaja textilis (Eastern brown snake)).